The primary structure comprises 358 residues: Peptide chain release factor 1 (358 aa).

Position 233 is an N5-methylglutamine (Gln233).

It belongs to the prokaryotic/mitochondrial release factor family. Post-translationally, methylated by PrmC. Methylation increases the termination efficiency of RF1.

The protein resides in the cytoplasm. In terms of biological role, peptide chain release factor 1 directs the termination of translation in response to the peptide chain termination codons UAG and UAA. This chain is Peptide chain release factor 1, found in Geobacillus sp. (strain WCH70).